The sequence spans 428 residues: Exodeoxyribonuclease 7 large subunit (428 aa).

Belongs to the XseA family. In terms of assembly, heterooligomer composed of large and small subunits.

It is found in the cytoplasm. The catalysed reaction is Exonucleolytic cleavage in either 5'- to 3'- or 3'- to 5'-direction to yield nucleoside 5'-phosphates.. Functionally, bidirectionally degrades single-stranded DNA into large acid-insoluble oligonucleotides, which are then degraded further into small acid-soluble oligonucleotides. The sequence is that of Exodeoxyribonuclease 7 large subunit from Mycobacterium leprae (strain TN).